A 96-amino-acid polypeptide reads, in one-letter code: Small ribosomal subunit protein bS6 (96 aa).

This sequence belongs to the bacterial ribosomal protein bS6 family.

Functionally, binds together with bS18 to 16S ribosomal RNA. This is Small ribosomal subunit protein bS6 from Streptococcus thermophilus (strain ATCC BAA-491 / LMD-9).